The chain runs to 294 residues: Glyceraldehyde-3-phosphate dehydrogenase (294 aa).

Asp-19, Lys-63, and Thr-105 together coordinate NAD(+). D-glyceraldehyde 3-phosphate is bound by residues 134–136 (SCT), Thr-165, 194–195 (TG), and Arg-217. The active-site Nucleophile is the Cys-135.

It belongs to the glyceraldehyde-3-phosphate dehydrogenase family. Homotetramer.

It localises to the cytoplasm. It catalyses the reaction D-glyceraldehyde 3-phosphate + phosphate + NAD(+) = (2R)-3-phospho-glyceroyl phosphate + NADH + H(+). It functions in the pathway carbohydrate degradation; glycolysis; pyruvate from D-glyceraldehyde 3-phosphate: step 1/5. Functionally, catalyzes the oxidative phosphorylation of glyceraldehyde 3-phosphate (G3P) to 1,3-bisphosphoglycerate (BPG) using the cofactor NAD. The first reaction step involves the formation of a hemiacetal intermediate between G3P and a cysteine residue, and this hemiacetal intermediate is then oxidized to a thioester, with concomitant reduction of NAD to NADH. The reduced NADH is then exchanged with the second NAD, and the thioester is attacked by a nucleophilic inorganic phosphate to produce BPG. The polypeptide is Glyceraldehyde-3-phosphate dehydrogenase (gap) (Serratia odorifera).